We begin with the raw amino-acid sequence, 1281 residues long: Dynactin subunit 1 (1281 aa).

The interval 1-25 (MAQSKRHVYSRTPSGSRMSAEASAR) is disordered. The region spanning 48–90 (GATLFATGKWVGVILDEAKGKNDGTVQGRKYFTCDEGHGIFVR) is the CAP-Gly domain. The disordered stretch occupies residues 99–225 (DGADTTSPET…EEEGLRAQVR (127 aa)). Over residues 102–114 (DTTSPETPDSSAS) the composition is skewed to polar residues. Phosphothreonine is present on residues Thr-108, Thr-145, Thr-146, and Thr-147. A compositionally biased stretch (basic residues) spans 129 to 152 (SKLRGPKPKKAPTARKTTTRRPKP). Residues 161–205 (AGASSSLGPSGSASAGELSSSEPSTPAQTPLAAPIIPTPALTSPG) are compositionally biased toward low complexity. Phosphoserine is present on residues Ser-179 and Ser-212. Residues 214-225 (SKEEEGLRAQVR) are compositionally biased toward basic and acidic residues. Coiled-coil stretches lie at residues 217-540 (EEGL…QQEA) and 952-1043 (IKEL…QSKR). The interaction with HPS6 stretch occupies residues 911 to 1281 (EYDAERPPSK…LHQLHDRLIS (371 aa)). Positions 1065 to 1084 (GEEQQRGGAPGQAPGIVPGP) are disordered.

The protein belongs to the dynactin 150 kDa subunit family. Monomer and homodimer. Subunit of dynactin, a multiprotein complex part of a tripartite complex with dynein and a adapter, such as BICDL1, BICD2 or HOOK3. The dynactin complex is built around ACTR1A/ACTB filament and consists of an actin-related filament composed of a shoulder domain, a pointed end and a barbed end. Its length is defined by its flexible shoulder domain. The soulder is composed of 2 DCTN1 subunits, 4 DCTN2 and 2 DCTN3. DCTN1/p150(glued) binds directly to microtubules and to cytoplasmic dynein. The 4 DCNT2 (via N-terminus) bind the ACTR1A filament and act as molecular rulers to determine the length. The pointed end is important for binding dynein-dynactin cargo adapters. Consists of 4 subunits: ACTR10, DCNT4, DCTN5 and DCTN6. The barbed end is composed of a CAPZA1:CAPZB heterodimers, which binds ACTR1A/ACTB filament and dynactin and stabilizes dynactin. Interacts with the C-terminus of MAPRE1, MAPRE2 and MAPRE3. Interacts (via C-terminus) with SNX6. Interacts with CLN3, DYNAP, ECPAS and FBXL5. Interacts with MISP; this interaction regulates its distribution at the cell cortex. Interacts with CEP131. Interacts with CEP126. Interacts with CLIP1. Interacts with dynein intermediate chain and dynein heavy chain. Interacts with PLK1 (via POLO-box domain). Interacts with TBCB. Binds preferentially to tyrosinated microtubules than to detyrosinated microtubules. Interacts with PARD6A. Interacts with HPS6. Interacts with KIF3A. Interacts with BICD2. Interacts with DST (isoform 9). Interacts with DST (isoform 1). Identified in a complex with MREG and RILP. Interacts with BCCIP (isoform 2/alpha). Interacts with DCDC1. Interacts with AKNA. Interacts with DYNC1I2. Interacts with RUFY3 and RUFY4. Post-translationally, ubiquitinated by a SCF complex containing FBXL5, leading to its degradation by the proteasome. In terms of processing, phosphorylation by SLK at Thr-145, Thr-146 and Thr-147 targets DCTN1 to the centrosome. It is uncertain if SLK phosphorylates all three threonines or one or two of them. PLK1-mediated phosphorylation at Ser-179 is essential for its localization in the nuclear envelope, promotes its dissociation from microtubules during early mitosis and positively regulates nuclear envelope breakdown during prophase.

Its subcellular location is the cytoplasm. The protein resides in the cytoskeleton. The protein localises to the microtubule organizing center. It is found in the centrosome. It localises to the centriole. Its subcellular location is the spindle. The protein resides in the nucleus envelope. The protein localises to the cell cortex. In terms of biological role, part of the dynactin complex that activates the molecular motor dynein for ultra-processive transport along microtubules. Plays a key role in dynein-mediated retrograde transport of vesicles and organelles along microtubules by recruiting and tethering dynein to microtubules. Binds to both dynein and microtubules providing a link between specific cargos, microtubules and dynein. Essential for targeting dynein to microtubule plus ends, recruiting dynein to membranous cargos and enhancing dynein processivity (the ability to move along a microtubule for a long distance without falling off the track). Can also act as a brake to slow the dynein motor during motility along the microtubule. Can regulate microtubule stability by promoting microtubule formation, nucleation and polymerization and by inhibiting microtubule catastrophe in neurons. Inhibits microtubule catastrophe by binding both to microtubules and to tubulin, leading to enhanced microtubule stability along the axon. Plays a role in metaphase spindle orientation. Plays a role in centriole cohesion and subdistal appendage organization and function. Its recruitment to the centriole in a KIF3A-dependent manner is essential for the maintenance of centriole cohesion and the formation of subdistal appendage. Also required for microtubule anchoring at the mother centriole. Plays a role in primary cilia formation. The chain is Dynactin subunit 1 (DCTN1) from Sus scrofa (Pig).